The following is a 199-amino-acid chain: LIM domain-containing protein E (199 aa).

The region spanning 5 to 65 (VKCGACAKTA…PVHTPKVSAT (61 aa)) is the LIM zinc-binding domain. A disordered region spans residues 134–199 (YAVFGADGQP…EEEQQYEEEQ (66 aa)). Low complexity-rich tracts occupy residues 146–155 (EQQEQQQYTE) and 163–174 (EEQQYQEEQQQY). Acidic residues predominate over residues 175 to 199 (QEEEQQYQEEEQQYQEEEQQYEEEQ).

In terms of assembly, may interact with rac1A.

The protein localises to the cytoplasm. Its subcellular location is the cell cortex. The protein resides in the nucleus. It is found in the cell projection. It localises to the lamellipodium. The protein localises to the filopodium. Its subcellular location is the cytoskeleton. Its function is as follows. Associates with the actin cytoskeleton and may regulate actin polymerization in lamellipodia, through a rac1-dependent signaling pathway. May play a role in cell motility. Involved in cytokinesis by regulating the microtubule system and linking it to the cortical actin network. The sequence is that of LIM domain-containing protein E (limE) from Dictyostelium discoideum (Social amoeba).